The chain runs to 439 residues: Protein PHYTOCHROME KINASE SUBSTRATE 1 (439 aa).

The span at methionine 1–threonine 14 shows a compositional bias: polar residues. 3 disordered regions span residues methionine 1–asparagine 22, lysine 54–aspartate 80, and glutamine 100–asparagine 139. Positions lysine 63–glutamate 79 are enriched in basic and acidic residues. 2 stretches are compositionally biased toward polar residues: residues glutamine 100–asparagine 109 and aspartate 118–asparagine 139. Phosphoserine occurs at positions 238 and 244. Disordered stretches follow at residues leucine 259–tyrosine 311 and threonine 355–glutamine 439. The span at threonine 412 to arginine 421 shows a compositional bias: basic and acidic residues. Over residues serine 424–glutamine 439 the composition is skewed to low complexity.

The protein belongs to the PKS family. Interacts with PKS2, RPT3, PHOT1, PHOT2 and the C-termini of both phytochromes A (phyA) and B (phyB). Binds both spectral forms of phytochrome, Pr and Pfr. Phosphorylated on Ser and to a lower extent on Thr by phytochromes. Phosphorylation is stimulated twofold by red light. In terms of tissue distribution, expressed in young seedlings in both darkness and light. Moderate in leaves and very low in roots and flowers. Expressed in the elongation zone of the root and hypocotyl.

Its subcellular location is the cell membrane. In terms of biological role, may be responsible for light-regulated cytoplasmic sequestration of phytochromes or may be a negative regulator of phytochrome B signaling. Component of the network that modulates the very low-fluence response (VLFR) branch of phyA signaling. Acts positively in PHOT1 signaling. Regulates phytochrome-mediated photomorphogenesis and hypocotyl phototropism. Involved in the control of leaf flattening and leaf positioning. Promotes negative root phototropism and negatively regulates root gravitropism. May act by controlling auxin homeostasis. The protein is Protein PHYTOCHROME KINASE SUBSTRATE 1 (PKS1) of Arabidopsis thaliana (Mouse-ear cress).